We begin with the raw amino-acid sequence, 470 residues long: Serine hydroxymethyltransferase, cytosolic (470 aa).

Residues 1–11 (MSAYALSQSHR) are compositionally biased toward polar residues. The segment at 1–23 (MSAYALSQSHRQLTEGHLKDTDP) is disordered. Ser-2 is modified (N-acetylserine). Basic and acidic residues predominate over residues 12 to 23 (QLTEGHLKDTDP). Lys-249 carries the post-translational modification N6-(pyridoxal phosphate)lysine.

It belongs to the SHMT family. Homotetramer. Requires pyridoxal 5'-phosphate as cofactor.

It localises to the cytoplasm. It catalyses the reaction (6R)-5,10-methylene-5,6,7,8-tetrahydrofolate + glycine + H2O = (6S)-5,6,7,8-tetrahydrofolate + L-serine. It participates in one-carbon metabolism; tetrahydrofolate interconversion. Its function is as follows. Interconversion of serine and glycine. The protein is Serine hydroxymethyltransferase, cytosolic (SHM2) of Candida albicans (strain SC5314 / ATCC MYA-2876) (Yeast).